The primary structure comprises 326 residues: Ribosomal large subunit pseudouridine synthase D (326 aa).

The S4 RNA-binding domain maps to 18 to 91 (QRLDQALAEM…IPLDIVYEDD (74 aa)). The active site involves D139. Residues 183–203 (GTVNEPISRHPTKRTHMSVHP) form a disordered region.

The protein belongs to the pseudouridine synthase RluA family.

It localises to the cytoplasm. The catalysed reaction is uridine(1911/1915/1917) in 23S rRNA = pseudouridine(1911/1915/1917) in 23S rRNA. Responsible for synthesis of pseudouridine from uracil at positions 1911, 1915 and 1917 in 23S ribosomal RNA. In Salmonella typhi, this protein is Ribosomal large subunit pseudouridine synthase D (rluD).